The sequence spans 254 residues: 3-deoxy-manno-octulosonate cytidylyltransferase (254 aa).

The protein belongs to the KdsB family.

The protein localises to the cytoplasm. It catalyses the reaction 3-deoxy-alpha-D-manno-oct-2-ulosonate + CTP = CMP-3-deoxy-beta-D-manno-octulosonate + diphosphate. The protein operates within nucleotide-sugar biosynthesis; CMP-3-deoxy-D-manno-octulosonate biosynthesis; CMP-3-deoxy-D-manno-octulosonate from 3-deoxy-D-manno-octulosonate and CTP: step 1/1. It functions in the pathway bacterial outer membrane biogenesis; lipopolysaccharide biosynthesis. Activates KDO (a required 8-carbon sugar) for incorporation into bacterial lipopolysaccharide in Gram-negative bacteria. The chain is 3-deoxy-manno-octulosonate cytidylyltransferase from Bordetella pertussis (strain Tohama I / ATCC BAA-589 / NCTC 13251).